The sequence spans 294 residues: uncharacterized protein (294 aa).

3 helical membrane passes run 21–41 (AIVA…TFTF), 51–71 (PIIW…LWAA), and 77–97 (ILFS…VFLF). The tract at residues 156-176 (HPVPFPAEPGSPDPVSPPPPI) is disordered. A coiled-coil region spans residues 184 to 215 (ERAESLHAGNIELAEDLQRIQEMERNLENERS). Basic and acidic residues predominate over residues 265 to 277 (QQENESRLEERRF). A disordered region spans residues 265 to 294 (QQENESRLEERRFQSHSTNSLFEADSSRDN).

It is found in the mitochondrion membrane. This is an uncharacterized protein from Arabidopsis thaliana (Mouse-ear cress).